The chain runs to 86 residues: RNA-binding protein Hfq (86 aa).

The Sm domain maps to 9 to 68; sequence DPYLNTLRKEKVPVSIYLVNGIKLQGSIESFDQFVVLLKNTVSQMVYKHAISTVVPARPV. The tract at residues 66–86 is disordered; sequence RPVRLPSPTDSEHGDSEPGNA. Residues 75 to 86 are compositionally biased toward basic and acidic residues; the sequence is DSEHGDSEPGNA.

Belongs to the Hfq family. In terms of assembly, homohexamer.

RNA chaperone that binds small regulatory RNA (sRNAs) and mRNAs to facilitate mRNA translational regulation in response to envelope stress, environmental stress and changes in metabolite concentrations. Also binds with high specificity to tRNAs. The chain is RNA-binding protein Hfq from Pseudomonas putida (strain ATCC 700007 / DSM 6899 / JCM 31910 / BCRC 17059 / LMG 24140 / F1).